Consider the following 210-residue polypeptide: Thymidylate kinase (210 aa).

Residue 9-16 coordinates ATP; the sequence is GPEGAGKT.

The protein belongs to the thymidylate kinase family.

The catalysed reaction is dTMP + ATP = dTDP + ADP. Functionally, phosphorylation of dTMP to form dTDP in both de novo and salvage pathways of dTTP synthesis. The chain is Thymidylate kinase from Thermomicrobium roseum (strain ATCC 27502 / DSM 5159 / P-2).